A 536-amino-acid polypeptide reads, in one-letter code: MKTVETLNEGLKREYRVTITAKDIDARVDEEVKSIAPTVRMPGFRPGKVPPNLIRKMHGAALSADALNKAIDAGVRDLMAKEKLRPALQPAVTLADGYEAGKDAELTVALEVLPEIETPSIDGLKLERLTVPADDKAVMAKIEEFAAQMKRFEEAPKTRKAATGDQVIIDFAGSVDGTPFDGGTGEDMAVEIGSGQLIPGFEDQLVGVKAGDEKTLKVTFPEDYPVETLKGKLAEFAVTVKEVKVPAATKIDDEFAKSLGLESLDKLKELMKDQVEQELNGLTRTHMKRKLLDQLAAAHDFEVPPTMVEAEFNQIWQQLEHEASHEEDPEAAKAELENDREEYRAIAVRRVRLGLLLSEIGQAHGVQVSQQEMQRLIMQAAQQYRPEDRQRFVEYVQQDALAAAQLRAPLYEDKVVDFLFEKAEITDRETTREELEAAIEADDDSGHVHGPGCGHDHDEKPAKKAAAKKPATKKEAVKDEAKAEEAPAKKAPAKKAEPKAEAKPAAAKKAAPAKAAAEEKAEPAKKAPAKKAAAKK.

The 86-residue stretch at Gly-164–Thr-249 folds into the PPIase FKBP-type domain. The segment at Ile-439–Lys-536 is disordered. A compositionally biased stretch (basic and acidic residues) spans Thr-472–Ala-502. Positions Lys-503–Ala-515 are enriched in low complexity. Over residues Ala-516–Lys-525 the composition is skewed to basic and acidic residues. Over residues Ala-527–Lys-536 the composition is skewed to basic residues.

This sequence belongs to the FKBP-type PPIase family. Tig subfamily.

It localises to the cytoplasm. It carries out the reaction [protein]-peptidylproline (omega=180) = [protein]-peptidylproline (omega=0). In terms of biological role, involved in protein export. Acts as a chaperone by maintaining the newly synthesized protein in an open conformation. Functions as a peptidyl-prolyl cis-trans isomerase. The protein is Trigger factor of Sphingopyxis alaskensis (strain DSM 13593 / LMG 18877 / RB2256) (Sphingomonas alaskensis).